Here is a 57-residue protein sequence, read N- to C-terminus: Insulin (57 aa).

3 disulfide bridges follow: C12-C43, C24-C56, and C42-C47.

It belongs to the insulin family. Heterodimer of a B chain and an A chain linked by two disulfide bonds.

It localises to the secreted. In terms of biological role, insulin decreases blood glucose concentration. It increases cell permeability to monosaccharides, amino acids and fatty acids. It accelerates glycolysis, the pentose phosphate cycle, and glycogen synthesis in liver. The chain is Insulin (ins) from Lampetra fluviatilis (European river lamprey).